Consider the following 156-residue polypeptide: Small ribosomal subunit protein uS7 (156 aa).

The protein belongs to the universal ribosomal protein uS7 family. In terms of assembly, part of the 30S ribosomal subunit. Contacts proteins S9 and S11.

Functionally, one of the primary rRNA binding proteins, it binds directly to 16S rRNA where it nucleates assembly of the head domain of the 30S subunit. Is located at the subunit interface close to the decoding center, probably blocks exit of the E-site tRNA. The polypeptide is Small ribosomal subunit protein uS7 (Shouchella clausii (strain KSM-K16) (Alkalihalobacillus clausii)).